Here is a 179-residue protein sequence, read N- to C-terminus: Replication restart protein DnaT (179 aa).

The disordered stretch occupies residues 156–179 (GGLPKRDVNTVSEPDSQIPPGFRG).

This sequence belongs to the DnaT family. As to quaternary structure, homooligomerizes. Interacts with PriB. Component of the replication restart primosome. Primosome assembly occurs via a 'hand-off' mechanism. PriA binds to replication forks, subsequently PriB then DnaT bind; DnaT then displaces ssDNA to generate the helicase loading substrate.

Involved in the restart of stalled replication forks, which reloads the replicative helicase on sites other than the origin of replication. Can function in multiple replication restart pathways. Displaces ssDNA from a PriB-ssDNA complex. Probably forms a spiral filament on ssDNA. In Escherichia coli O157:H7, this protein is Replication restart protein DnaT.